The chain runs to 285 residues: uncharacterized protein (285 aa).

The 108-residue stretch at 92–199 (TLLLADVEES…PTINRTARLR (108 aa)) folds into the Guanylate cyclase domain.

Belongs to the adenylyl cyclase class-4/guanylyl cyclase family.

This is an uncharacterized protein from Mycobacterium tuberculosis (strain CDC 1551 / Oshkosh).